The chain runs to 354 residues: Rhodopsin (354 aa).

Over 1-36 the chain is Extracellular; it reads MNGTEGPYFNVPMVNTTGIVRSPYEYPQYYLVSPAA. Asparagine 2 and asparagine 15 each carry an N-linked (GlcNAc...) asparagine glycan. A helical transmembrane segment spans residues 37–61; it reads YAALGAYMFFLILVGFPINFLTLYV. The Cytoplasmic portion of the chain corresponds to 62 to 73; that stretch reads TLEHKKLRTPLN. Residues 74–96 traverse the membrane as a helical segment; sequence YILLNLAVADLFMVFGGFTTTMY. Residues 97-110 are Extracellular-facing; it reads TSMHGYFVLGRLGC. Residues cysteine 110 and cysteine 187 are joined by a disulfide bond. The chain crosses the membrane as a helical span at residues 111-133; the sequence is NLEGFFATLGGEIGLWSLVVLAI. Positions 134–136 match the 'Ionic lock' involved in activated form stabilization motif; that stretch reads ERW. The Cytoplasmic portion of the chain corresponds to 134-152; sequence ERWVVVCKPISNFRFGENH. The helical transmembrane segment at 153–173 threads the bilayer; sequence AIMGLVFTWIMAASCAVPPLV. Residues 174–202 are Extracellular-facing; that stretch reads GWSRYIPEGMQCSCGVDYYTRAEGFNNES. A helical transmembrane segment spans residues 203 to 224; sequence FVVYMFVCHFLIPLIVVFFCYG. Residues 225–252 are Cytoplasmic-facing; the sequence is RLLCAVKEAAAAQQESETTQRAEREVTR. Residues 253–274 traverse the membrane as a helical segment; the sequence is MVVIMVIGFLVCWLPYASVAWY. Over 275 to 286 the chain is Extracellular; the sequence is IFTNQGSEFGPL. Residues 287 to 308 traverse the membrane as a helical segment; it reads FMTIPAFFAKSSSIYNPAIYIC. Lysine 296 carries the N6-(retinylidene)lysine modification. Over 309–354 the chain is Cytoplasmic; that stretch reads MNKQFRNCMITTLCCGKNPFEEEEGASTTASKTEASSVSSSSVSPA. S-palmitoyl cysteine attachment occurs at residues cysteine 322 and cysteine 323. Residues 332-354 are disordered; the sequence is EGASTTASKTEASSVSSSSVSPA. Residues 334-354 are compositionally biased toward low complexity; it reads ASTTASKTEASSVSSSSVSPA.

This sequence belongs to the G-protein coupled receptor 1 family. Opsin subfamily. In terms of processing, phosphorylated on some or all of the serine and threonine residues present in the C-terminal region. Post-translationally, contains one covalently linked retinal chromophore.

It localises to the membrane. The protein localises to the cell projection. Its subcellular location is the cilium. The protein resides in the photoreceptor outer segment. Photoreceptor required for image-forming vision at low light intensity. While most salt water fish species use retinal as chromophore, most freshwater fish use 3-dehydroretinal, or a mixture of retinal and 3-dehydroretinal. Light-induced isomerization of 11-cis to all-trans retinal triggers a conformational change that activates signaling via G-proteins. Subsequent receptor phosphorylation mediates displacement of the bound G-protein alpha subunit by arrestin and terminates signaling. This is Rhodopsin (rho) from Oryzias latipes (Japanese rice fish).